A 317-amino-acid polypeptide reads, in one-letter code: Nitrilase (317 aa).

The 276-residue stretch at 5–280 folds into the CN hydrolase domain; that stretch reads VKVAVVQAEP…DGVIISELDM (276 aa). The active-site Proton acceptor is the E45. Residue K125 is part of the active site. C165 acts as the Nucleophile in catalysis.

This sequence belongs to the carbon-nitrogen hydrolase superfamily. Nitrilase family.

The enzyme catalyses a nitrile + 2 H2O = a carboxylate + NH4(+). Nitrilase that hydrolyzes preferentially 4-cyanopyridine. Is also able to hydrolyze some aliphatic nitriles, such as phenylacetonitrile. This chain is Nitrilase, found in Meyerozyma guilliermondii (strain ATCC 6260 / CBS 566 / DSM 6381 / JCM 1539 / NBRC 10279 / NRRL Y-324) (Yeast).